We begin with the raw amino-acid sequence, 474 residues long: Methylenetetrahydrofolate--tRNA-(uracil-5-)-methyltransferase TrmFO (474 aa).

9-14 is a binding site for FAD; the sequence is GGGLAG. Positions 425–451 are disordered; sequence PPLERMPRNETGKRLRGPEKAALKKRA. Residues 429–451 are compositionally biased toward basic and acidic residues; sequence RMPRNETGKRLRGPEKAALKKRA.

The protein belongs to the MnmG family. TrmFO subfamily. It depends on FAD as a cofactor.

The protein resides in the cytoplasm. It carries out the reaction uridine(54) in tRNA + (6R)-5,10-methylene-5,6,7,8-tetrahydrofolate + NADH + H(+) = 5-methyluridine(54) in tRNA + (6S)-5,6,7,8-tetrahydrofolate + NAD(+). It catalyses the reaction uridine(54) in tRNA + (6R)-5,10-methylene-5,6,7,8-tetrahydrofolate + NADPH + H(+) = 5-methyluridine(54) in tRNA + (6S)-5,6,7,8-tetrahydrofolate + NADP(+). Functionally, catalyzes the folate-dependent formation of 5-methyl-uridine at position 54 (M-5-U54) in all tRNAs. The polypeptide is Methylenetetrahydrofolate--tRNA-(uracil-5-)-methyltransferase TrmFO (Methylorubrum populi (strain ATCC BAA-705 / NCIMB 13946 / BJ001) (Methylobacterium populi)).